The chain runs to 351 residues: Deoxyuridylate hydroxymethyltransferase (351 aa).

The protein belongs to the thymidylate synthase family.

It carries out the reaction dUMP + (6R)-5,10-methylene-5,6,7,8-tetrahydrofolate + H2O = 5-hydroxymethyl-dUMP + (6S)-5,6,7,8-tetrahydrofolate. Catalyzes formation of 5-hydroxymethyldeoxyuridylate (5HMdUMP) as a step in the pathway that replaces dTMP by thymidine hypermodifications in the viral genome. As a final result of the pathway of hypermodification, 5-aminoethyl-2'-deoxyuridine (5-NedU) substitutes for about 30% of thymidines in the viral DNA. These modifications probably prevent degradation of viral genome by the host restriction-modification antiviral defense system. This chain is Deoxyuridylate hydroxymethyltransferase, found in Pseudomonas aeruginosa.